Reading from the N-terminus, the 299-residue chain is MMENSTTEARNEATMHLDEMTVEEALITMNKEDQQVPLAVQKAIPQLTKVIKKTIAQYKKGGRLIYIGAGTSGRLGVLDAAECVPTFNTDPHEIIGIIAGGQHAMTMAVEGAEDHKKLAEEDLKNIDLTSKDVVIGIAASGKTPYVIGGLTFANTIGATTVSISCNEHAVISEIAQYPVEVKVGPEVLTGSTRLKSGTAQKLILNMISTITMVGVGKVYDNLMIDVKATNQKLIDRSVRIIQEICAITYDEAMALYQVSEHDVKVATVMGMCGISKEEATRRLLNNGDIVKRAIRDRQP.

Residues 54 to 217 enclose the SIS domain; the sequence is TIAQYKKGGR…STITMVGVGK (164 aa). The active-site Proton donor is the glutamate 82. Glutamate 113 is a catalytic residue.

Belongs to the GCKR-like family. MurNAc-6-P etherase subfamily. As to quaternary structure, homodimer.

The enzyme catalyses N-acetyl-D-muramate 6-phosphate + H2O = N-acetyl-D-glucosamine 6-phosphate + (R)-lactate. It participates in amino-sugar metabolism; N-acetylmuramate degradation. Its function is as follows. Specifically catalyzes the cleavage of the D-lactyl ether substituent of MurNAc 6-phosphate, producing GlcNAc 6-phosphate and D-lactate. This Staphylococcus aureus (strain bovine RF122 / ET3-1) protein is N-acetylmuramic acid 6-phosphate etherase.